A 249-amino-acid chain; its full sequence is 3-deoxy-D-manno-octulosonic acid kinase (249 aa).

Asp-175 is an active-site residue.

The protein belongs to the protein kinase superfamily. KdkA/RfaP family.

The protein resides in the cell inner membrane. It carries out the reaction an alpha-Kdo-(2-&gt;6)-lipid IVA + ATP = a 4-O-phospho-alpha-Kdo-(2-&gt;6)-lipid IVA + ADP + H(+). It participates in bacterial outer membrane biogenesis; LPS core biosynthesis. Functionally, catalyzes the ATP-dependent phosphorylation of the 3-deoxy-D-manno-octulosonic acid (Kdo) residue in Kdo-lipid IV(A) at the 4-OH position. This is 3-deoxy-D-manno-octulosonic acid kinase from Xanthomonas axonopodis pv. citri (strain 306).